The sequence spans 61 residues: Metallothionein-1B (61 aa).

The interval 1-29 is beta; sequence MDPNCSCVAGESCTCAGSCKCKQCRCASC. A divalent metal cation contacts are provided by cysteine 5, cysteine 7, cysteine 13, cysteine 15, cysteine 19, cysteine 21, cysteine 24, cysteine 26, cysteine 29, cysteine 33, cysteine 34, cysteine 36, cysteine 37, cysteine 41, cysteine 44, cysteine 48, cysteine 50, cysteine 57, cysteine 59, and cysteine 60. Residues 30 to 61 form an alpha region; the sequence is KKSCCSCCPVGCAKCAQGCVCKGASDKCSCCA.

This sequence belongs to the metallothionein superfamily. Type 1 family.

Its function is as follows. Metallothioneins have a high content of cysteine residues that bind various heavy metals; these proteins are transcriptionally regulated by both heavy metals and glucocorticoids. In Equus caballus (Horse), this protein is Metallothionein-1B.